The sequence spans 564 residues: Nucleoprotein (564 aa).

Residues 54–236 (LRKTKRGEED…VTKDESSINI (183 aa)) form a binding site for the cap structure m7GTP region. Mn(2+) is bound by residues Asp380 and Glu382. Residues Glu390, Cys497, His500, and Cys525 each coordinate Zn(2+). A Mn(2+)-binding site is contributed by Asp529.

This sequence belongs to the arenaviridae nucleocapsid protein family. As to quaternary structure, homomultimerizes to form the nucleocapsid. Binds to viral genomic RNA. Interacts with glycoprotein G2. Interacts with protein Z; this interaction probably directs the encapsidated genome to budding sites. Interacts with protein L; this interaction does not interfere with Z-L interaction. Interacts with host IKBKE (via Protein kinase domain); the interaction inhibits IKBKE kinase activity.

The protein resides in the virion. It is found in the host cytoplasm. Functionally, encapsidates the genome, protecting it from nucleases. The encapsidated genomic RNA is termed the nucleocapsid (NC). Serves as template for viral transcription and replication. The increased presence of protein N in host cell does not seem to trigger the switch from transcription to replication as observed in other negative strain RNA viruses. Through the interaction with host IKBKE, strongly inhibits the phosphorylation and nuclear translocation of host IRF3, a protein involved in interferon activation pathway, leading to the inhibition of interferon-beta and IRF3-dependent promoters activation. Also encodes a functional 3'-5' exoribonuclease that degrades preferentially dsRNA substrates and thereby participates in the suppression of interferon induction. This Akodon azarae (Azara's grass mouse) protein is Nucleoprotein.